Here is a 117-residue protein sequence, read N- to C-terminus: MAAYCQAQGLDVVLAALLGAINQQPSRQQFQQQQQQQRQPQLQQQQQQQGIQQQPQGLQHQQQQFGLTQQHGQGRRQNIVQPNPASQNNNRMMLDMLLLNQIAQSNRMNTLAFIMAN.

The segment covering 27-72 has biased composition (low complexity); it reads RQQFQQQQQQQRQPQLQQQQQQQGIQQQPQGLQHQQQQFGLTQQHG. A disordered region spans residues 27 to 88; sequence RQQFQQQQQQ…IVQPNPASQN (62 aa). Positions 75 to 87 are enriched in polar residues; the sequence is RRQNIVQPNPASQ.

Component of the acid-soluble and acid-insoluble organic matrix of calcified shell layers (at protein level).

It is found in the secreted. The protein is Glutamine-rich protein of Haliotis asinina (Donkey's ear abalone).